The sequence spans 337 residues: Ketol-acid reductoisomerase (NADP(+)) (337 aa).

Residues 3-183 (IELLYDADAD…GGARAGVIPT (181 aa)) form the KARI N-terminal Rossmann domain. Residues 26–29 (YGSQ), Arg-49, Ser-52, Ser-54, and 84–87 (DTSQ) contribute to the NADP(+) site. The active site involves His-109. Residue Gly-135 coordinates NADP(+). Positions 184 to 329 (TFREETETDL…SKLRDLMSWV (146 aa)) constitute a KARI C-terminal knotted domain. Mg(2+) contacts are provided by Asp-192, Glu-196, Glu-228, and Glu-232. Ser-253 provides a ligand contact to substrate.

Belongs to the ketol-acid reductoisomerase family. Mg(2+) is required as a cofactor.

The enzyme catalyses (2R)-2,3-dihydroxy-3-methylbutanoate + NADP(+) = (2S)-2-acetolactate + NADPH + H(+). The catalysed reaction is (2R,3R)-2,3-dihydroxy-3-methylpentanoate + NADP(+) = (S)-2-ethyl-2-hydroxy-3-oxobutanoate + NADPH + H(+). Its pathway is amino-acid biosynthesis; L-isoleucine biosynthesis; L-isoleucine from 2-oxobutanoate: step 2/4. It functions in the pathway amino-acid biosynthesis; L-valine biosynthesis; L-valine from pyruvate: step 2/4. Functionally, involved in the biosynthesis of branched-chain amino acids (BCAA). Catalyzes an alkyl-migration followed by a ketol-acid reduction of (S)-2-acetolactate (S2AL) to yield (R)-2,3-dihydroxy-isovalerate. In the isomerase reaction, S2AL is rearranged via a Mg-dependent methyl migration to produce 3-hydroxy-3-methyl-2-ketobutyrate (HMKB). In the reductase reaction, this 2-ketoacid undergoes a metal-dependent reduction by NADPH to yield (R)-2,3-dihydroxy-isovalerate. The sequence is that of Ketol-acid reductoisomerase (NADP(+)) from Corynebacterium diphtheriae (strain ATCC 700971 / NCTC 13129 / Biotype gravis).